The chain runs to 341 residues: HTH-type transcriptional repressor PurR (341 aa).

An HTH lacI-type domain is found at 2 to 56; sequence ATIKDVAKRANVSTTTVSHVINKTRFVAEETRNAVWAAIKELHYSPSAVARSLKV. The segment at residues 4–23 is a DNA-binding region (H-T-H motif); that stretch reads IKDVAKRANVSTTTVSHVIN. Residues 48-56 mediate DNA binding; the sequence is SAVARSLKV. Residues Tyr73, Arg190, Thr192, Phe221, and Asp275 each coordinate hypoxanthine.

Homodimer.

It participates in purine metabolism; purine nucleotide biosynthesis [regulation]. Is the main repressor of the genes involved in the de novo synthesis of purine nucleotides, regulating purB, purC, purEK, purF, purHD, purL, purMN and guaBA expression. PurR is allosterically activated to bind its cognate DNA by binding the purine corepressors, hypoxanthine or guanine, thereby effecting transcription repression. The sequence is that of HTH-type transcriptional repressor PurR from Salmonella typhimurium (strain LT2 / SGSC1412 / ATCC 700720).